A 472-amino-acid chain; its full sequence is MSCCIANAIRWDVSLLIHRSMSSSMSSVQPTSPVSDSPSLGEMHASVAVSRRGHWGFRLLAFLGPGYMVSVGYMDPGNWATGLAGGSRFGYMLLSVILLSNVMAIVLQALAARLGIASDMDLAQACRARYSRGTNLALWAVCELAIIACDLAEVIGTAIALNLLLGVPIILGAVITAVDVVLVLLLMHRGFRALEAFVIALLLVIFGCFVVQIVLAAPPLQEVLGGFVPRWQVVADPQALYLAIGIVGATVMPHNLYLHSSIVQTRAYPRTPVGRRSALRWAVADSTLALMLALFINASILILAAAVFHAQHHFDVEEIEQAYQLLAPVLGVGVAATLFATALLASGINSTVTATLAGQIVMEGFLRLRLRPWLRRVLTRGLAIVPVIVVVALYGEQGTGRLLLLSQVILSMQLPFAVIPLLRCVADRKVMGALVAPRWLMVVAWLIAGVIVVLNVKLLGDYAVHLMVGVSD.

11 consecutive transmembrane segments (helical) span residues 59–79, 92–112, 144–164, 167–187, 196–216, 233–253, 288–308, 325–345, 377–397, 402–422, and 439–459; these read LLAF…PGNW, MLLS…ALAA, LAII…LNLL, VPII…LLLM, AFVI…IVLA, VVAD…TVMP, LALM…AAVF, LLAP…ALLA, VLTR…YGEQ, LLLL…IPLL, and WLMV…VKLL.

It belongs to the NRAMP family.

The protein localises to the cell inner membrane. Its function is as follows. H(+)-stimulated, divalent metal cation uptake system. This chain is Divalent metal cation transporter MntH, found in Xylella fastidiosa (strain Temecula1 / ATCC 700964).